The chain runs to 127 residues: ALK and LTK ligand 1 (127 aa).

An N-terminal signal peptide occupies residues Met-1 to Gly-27. Intrachain disulfides connect Cys-88/Cys-124 and Cys-102/Cys-111.

This sequence belongs to the ALKAL family.

The protein localises to the secreted. It is found in the cell membrane. Its function is as follows. Cytokine that acts as a physiological ligand for receptor tyrosine kinase LTK, leading to its activation. Monomeric ALKAL1 binds to LTK, leading to LTK homodimerization and activation. In contrast to ALKAL2, does not act as a potent physiological ligand for ALK. The polypeptide is ALK and LTK ligand 1 (Mus musculus (Mouse)).